A 230-amino-acid polypeptide reads, in one-letter code: Probable tetraspanin tspD (230 aa).

Residues 1–20 are Cytoplasmic-facing; the sequence is MVEYLPSTPRYLKVPLIILN. The helical transmembrane segment at 21–41 threads the bilayer; it reads VILWLLGLVLVIIGGICVGFF. Residues 42 to 65 are Extracellular-facing; sequence SRFKELQEVGGVSESIKSISVSLP. Residues 66 to 86 traverse the membrane as a helical segment; that stretch reads AGVLSIGIFFMVLTVAGCIVA. Residues 87 to 90 lie on the Cytoplasmic side of the membrane; the sequence is YKEK. A helical transmembrane segment spans residues 91-111; the sequence is MVGLVFYTILMLVLLVVLIGI. Residues 112–200 lie on the Extracellular side of the membrane; it reads GGEALTYHNA…VNSKLYLVGS (89 aa). 4 N-linked (GlcNAc...) asparagine glycosylation sites follow: asparagine 133, asparagine 138, asparagine 163, and asparagine 179. A helical transmembrane segment spans residues 201–221; that stretch reads AGVAIGVIELVSLMFALFLIV. Residues 222–230 are Cytoplasmic-facing; sequence RLYKSNSYR.

Belongs to the tetraspanin (TM4SF) family.

It localises to the membrane. This chain is Probable tetraspanin tspD (tspD), found in Dictyostelium discoideum (Social amoeba).